The sequence spans 348 residues: Phosphate acyltransferase (348 aa).

The protein belongs to the PlsX family. Homodimer. Probably interacts with PlsY.

It localises to the cytoplasm. It carries out the reaction a fatty acyl-[ACP] + phosphate = an acyl phosphate + holo-[ACP]. It participates in lipid metabolism; phospholipid metabolism. Catalyzes the reversible formation of acyl-phosphate (acyl-PO(4)) from acyl-[acyl-carrier-protein] (acyl-ACP). This enzyme utilizes acyl-ACP as fatty acyl donor, but not acyl-CoA. The polypeptide is Phosphate acyltransferase (Leuconostoc citreum (strain KM20)).